Reading from the N-terminus, the 379-residue chain is Chorismate synthase (379 aa).

NADP(+) is bound by residues Arg48 and Arg54. FMN contacts are provided by residues 125-127 (RSS), 241-242 (NA), Gly286, 301-305 (KPTSS), and Arg327.

The protein belongs to the chorismate synthase family. As to quaternary structure, homotetramer. FMNH2 is required as a cofactor.

The enzyme catalyses 5-O-(1-carboxyvinyl)-3-phosphoshikimate = chorismate + phosphate. It participates in metabolic intermediate biosynthesis; chorismate biosynthesis; chorismate from D-erythrose 4-phosphate and phosphoenolpyruvate: step 7/7. In terms of biological role, catalyzes the anti-1,4-elimination of the C-3 phosphate and the C-6 proR hydrogen from 5-enolpyruvylshikimate-3-phosphate (EPSP) to yield chorismate, which is the branch point compound that serves as the starting substrate for the three terminal pathways of aromatic amino acid biosynthesis. This reaction introduces a second double bond into the aromatic ring system. In Rhodospirillum centenum (strain ATCC 51521 / SW), this protein is Chorismate synthase.